We begin with the raw amino-acid sequence, 207 residues long: Uracil phosphoribosyltransferase (207 aa).

Residues arginine 77, arginine 102, and 129-137 (DPMLATGGS) contribute to the 5-phospho-alpha-D-ribose 1-diphosphate site. Residues isoleucine 192 and 197–199 (GDA) contribute to the uracil site. 5-phospho-alpha-D-ribose 1-diphosphate is bound at residue aspartate 198.

The protein belongs to the UPRTase family. Requires Mg(2+) as cofactor.

It catalyses the reaction UMP + diphosphate = 5-phospho-alpha-D-ribose 1-diphosphate + uracil. It functions in the pathway pyrimidine metabolism; UMP biosynthesis via salvage pathway; UMP from uracil: step 1/1. Allosterically activated by GTP. Functionally, catalyzes the conversion of uracil and 5-phospho-alpha-D-ribose 1-diphosphate (PRPP) to UMP and diphosphate. The polypeptide is Uracil phosphoribosyltransferase (Mycoplasma mobile (strain ATCC 43663 / 163K / NCTC 11711) (Mesomycoplasma mobile)).